An 898-amino-acid polypeptide reads, in one-letter code: Phosphoenolpyruvate carboxylase (898 aa).

Active-site residues include H138 and K561.

The protein belongs to the PEPCase type 1 family. Mg(2+) is required as a cofactor.

The catalysed reaction is oxaloacetate + phosphate = phosphoenolpyruvate + hydrogencarbonate. Functionally, forms oxaloacetate, a four-carbon dicarboxylic acid source for the tricarboxylic acid cycle. The polypeptide is Phosphoenolpyruvate carboxylase (Streptococcus suis (strain 98HAH33)).